We begin with the raw amino-acid sequence, 449 residues long: Type 3 secretion system ATPase (449 aa).

ATP is bound at residue 178-183; that stretch reads GCGKTT.

Belongs to the ATPase alpha/beta chains family. T3SS ATPase subfamily. As to quaternary structure, the core secretion machinery of the T3SS is composed of approximately 20 different proteins, including cytoplasmic components, a base, an export apparatus and a needle. This subunit is part of the cytosolic complex. Forms homododecamers.

It is found in the cytoplasm. It catalyses the reaction ATP + H2O + cellular proteinSide 1 = ADP + phosphate + cellular proteinSide 2.. Functionally, ATPase component of the type III secretion system (T3SS), also called injectisome, which is used to inject bacterial effector proteins into eukaryotic host cells. Acts as a molecular motor to provide the energy that is required for the export of proteins. Required for type III secretion apparatus (T3SA) formation, proper protein secretion, host cell invasion and virulence. May play a critical role in T3SS substrate recognition, disassembly of the effector/chaperone complex and unfolding of the effector in an ATP-dependent manner prior to secretion. This Pseudomonas syringae pv. syringae protein is Type 3 secretion system ATPase.